We begin with the raw amino-acid sequence, 500 residues long: MAFNLLNKDIDTLTCPALVVFSKSSSQKDKLAKVTHSEIHKALLPSLEEKTISGKHQETVVFREFSFKGFRHVIVVGLGKENEITHESVRQSMASAYEAIKALNVTEAAVHFDGITAGKKDAADFAKATAEGLILTSYVFNELMSGKKETKEINVHVVSKMGNDKAVKAAFNEGAILGSVVNFSRRLGDLPGNLMTPTILADSAVEGAKGIANLKVTVWDKARIKKEKMGGLLGVSNGSDQEPRFIIMEYKGAAASKKPVCFVGKGLTFDCGGISIKPGAGMEEMKYDMCGGANVIGTLLAIAKLKLKVNAVGLVASTENLINGSATKPGDVHTARNGKTFEVNNTDAEGRLILADALSYATELQPQMIVDAATLTGAMVIALGNTHTGYFTRNSALKTKVEKAAAESGEWVWNMPLTDFHVKDMKGTYADLSNISSGKGAGSATAAAFLEQFVGEGIPWAHFDIAGTGWAVGNRLPYCPKKGASGAMIRTFVEIAKQYT.

Lysine 265 and aspartate 270 together coordinate Mn(2+). Lysine 277 is a catalytic residue. Residues aspartate 288, aspartate 347, and glutamate 349 each coordinate Mn(2+). Residue arginine 351 is part of the active site.

This sequence belongs to the peptidase M17 family. The cofactor is Mn(2+).

Its subcellular location is the cytoplasm. The catalysed reaction is Release of an N-terminal amino acid, Xaa-|-Yaa-, in which Xaa is preferably Leu, but may be other amino acids including Pro although not Arg or Lys, and Yaa may be Pro. Amino acid amides and methyl esters are also readily hydrolyzed, but rates on arylamides are exceedingly low.. It carries out the reaction Release of an N-terminal amino acid, preferentially leucine, but not glutamic or aspartic acids.. Presumably involved in the processing and regular turnover of intracellular proteins. Catalyzes the removal of unsubstituted N-terminal amino acids from various peptides. In Bdellovibrio bacteriovorus (strain ATCC 15356 / DSM 50701 / NCIMB 9529 / HD100), this protein is Probable cytosol aminopeptidase.